Here is a 520-residue protein sequence, read N- to C-terminus: Alpha-1B adrenergic receptor (520 aa).

The Extracellular portion of the chain corresponds to 1–45 (MNPDLDTGHNTSAPAHWGELKNANFTGPNQTSSNSTLPQLDITRA). Asn-10, Asn-24, Asn-29, and Asn-34 each carry an N-linked (GlcNAc...) asparagine glycan. The helical transmembrane segment at 46–70 (ISVGLVLGAFILFAIVGNILVILSV) threads the bilayer. The Cytoplasmic portion of the chain corresponds to 71 to 83 (ACNRHLRTPTNYF). A helical transmembrane segment spans residues 84–105 (IVNLAMADLLLSFTVLPFSAAL). The Extracellular segment spans residues 106-115 (EVLGYWVLGR). A helical transmembrane segment spans residues 116–141 (IFCDIWAAVDVLCCTASILSLCAISI). The cysteines at positions 118 and 195 are disulfide-linked. Residues 142 to 161 (DRYIGVRYSLQYPTLVTRRK) lie on the Cytoplasmic side of the membrane. A helical membrane pass occupies residues 162–184 (AILALLSVWVLSTVISIGPLLGW). The Extracellular portion of the chain corresponds to 185–201 (KEPAPNDDKECGVTEEP). Residues 202-224 (FYALFSSLGSFYIPLAVILVMYC) form a helical membrane-spanning segment. The Cytoplasmic portion of the chain corresponds to 225–295 (RVYIVAKRTT…FSREKKAAKT (71 aa)). A Phosphothreonine modification is found at Thr-264. A helical membrane pass occupies residues 296–319 (LGIVVGMFILCWLPFFIALPLGSL). Residues 320–326 (FSTLKPP) lie on the Extracellular side of the membrane. Residues 327–351 (DAVFKVVFWLGYFNSCLNPIIYPCS) traverse the membrane as a helical segment. Residues 352–520 (SKEFKRAFVR…SNMPLAPGQF (169 aa)) are Cytoplasmic-facing. Cys-365 carries the S-palmitoyl cysteine lipid modification. The Nuclear localization signal signature appears at 368–380 (RGRGRRRRRRRRR). 2 disordered regions span residues 394 to 432 (GGSL…GYLG) and 479 to 520 (LTEP…PGQF).

This sequence belongs to the G-protein coupled receptor 1 family. Adrenergic receptor subfamily. ADRA1B sub-subfamily. As to quaternary structure, homo- and heterooligomer. Heterooligomerizes with ADRA1B homooligomers in cardiac myocytes. Interacts with CAVIN4.

It localises to the nucleus membrane. It is found in the cell membrane. The protein resides in the cytoplasm. Its subcellular location is the membrane. The protein localises to the caveola. Its function is as follows. This alpha-adrenergic receptor mediates its action by association with G proteins that activate a phosphatidylinositol-calcium second messenger system. Its effect is mediated by G(q) and G(11) proteins. Nuclear ADRA1A-ADRA1B heterooligomers regulate phenylephrine (PE)-stimulated ERK signaling in cardiac myocytes. This Homo sapiens (Human) protein is Alpha-1B adrenergic receptor (ADRA1B).